The primary structure comprises 396 residues: MAVRIKLKPGREKSLERRHPWVFSNGIHNVKGKLEPGDTVDVVAHDGHWLGRGAWSPESQIQVRIWTFDREEEIDREFFKRRILRAQAGRDDLIREQGLTGYRLIAAESDGLPGITIDKYANVLVCQLLSMGADVWRDTIVDVLAELYPDCAIYERSDVDSRKKEGLASTMGLLHGSLPEMPVIIEENGIKIAVDVTKGHKTGFYLDQRDNRAMAARFVKGKSVLNCFCYTGTFGLYAAKAGAASIENVDVSALALDTARLNMRVNGLNDDNVHYNEADVFKLLRQYRDEGKTFDVIVLDPPKFADNKSQLNGACRGYKDINMIALQLLNPGGVLLTFSCSGLMPADLFQKIVADAALDAKREIQFIERLSQASDHPIGSAFPEGFYLKGLVARVW.

The PUA domain maps to A2–F79.

This sequence belongs to the methyltransferase superfamily. RlmI family.

The protein localises to the cytoplasm. The catalysed reaction is cytidine(1962) in 23S rRNA + S-adenosyl-L-methionine = 5-methylcytidine(1962) in 23S rRNA + S-adenosyl-L-homocysteine + H(+). Functionally, specifically methylates the cytosine at position 1962 (m5C1962) of 23S rRNA. The protein is Ribosomal RNA large subunit methyltransferase I of Shewanella sp. (strain MR-7).